The primary structure comprises 136 residues: Ribosome-binding factor A (136 aa).

Belongs to the RbfA family. As to quaternary structure, monomer. Binds 30S ribosomal subunits, but not 50S ribosomal subunits or 70S ribosomes.

It is found in the cytoplasm. Its function is as follows. One of several proteins that assist in the late maturation steps of the functional core of the 30S ribosomal subunit. Associates with free 30S ribosomal subunits (but not with 30S subunits that are part of 70S ribosomes or polysomes). Required for efficient processing of 16S rRNA. May interact with the 5'-terminal helix region of 16S rRNA. The chain is Ribosome-binding factor A from Yersinia pestis bv. Antiqua (strain Antiqua).